A 244-amino-acid polypeptide reads, in one-letter code: Protein IN2-1 homolog B (244 aa).

The interval 1 to 27 (MAAAAAAPASSEKEVLPPSLTSSSEPP) is disordered. The GST N-terminal domain occupies 32-113 (GTTRLYVAYH…YIDTNFEGPA (82 aa)). Glutathione-binding positions include Val85 and 97 to 98 (ES). Positions 118-241 (DSEKQQFAEE…FLLEHTKKRL (124 aa)) constitute a GST C-terminal domain.

In Oryza sativa subsp. indica (Rice), this protein is Protein IN2-1 homolog B (GSTZ5).